The primary structure comprises 177 residues: Preprotein translocase subunit SECE1 (177 aa).

A chloroplast-targeting transit peptide spans 1 to 38 (MSLTAQFSPPVTGITRSLRDTKPSLSNLRVFPVYTEIR). Positions 60-87 (RDTAGSESESEATPSPAEESGSGEDKEV) are disordered. The span at 64-79 (GSESESEATPSPAEES) shows a compositional bias: low complexity. The chain crosses the membrane as a helical span at residues 140–160 (VVLGVIAGSSVVLLTVNFLLA).

This sequence belongs to the SecE/SEC61-gamma family. As to quaternary structure, part of the Sec protein translocation apparatus. Interacts with SCY1 and ALB3.

Its subcellular location is the plastid. The protein localises to the chloroplast thylakoid membrane. Its function is as follows. Involved in the import/insertion pathway in the thylakoids. The signal recognition particle is not involved in the insertion of SECE1 in the thylakoid membrane. The chain is Preprotein translocase subunit SECE1 (SECE1) from Arabidopsis thaliana (Mouse-ear cress).